The primary structure comprises 89 residues: FMRFamide-like neuropeptides 19 (89 aa).

The signal sequence occupies residues methionine 1 to glycine 20. The propeptide occupies glutamine 21–glutamate 67. The residue at position 76 (phenylalanine 76) is a Phenylalanine amide. A propeptide spanning residues alanine 80–glycine 89 is cleaved from the precursor.

It belongs to the FARP (FMRFamide related peptide) family. In terms of tissue distribution, each flp gene is expressed in a distinct set of neurons. Flp-19 is expressed in the URX interneurons, the serotonin and acetylcholine-expressing HSN neurons, and the AIN, AWA and BAG neurons.

The protein localises to the secreted. In terms of biological role, FMRFamides and FMRFamide-like peptides are neuropeptides. WANQVRF-amide inhibits the activity of dissected pharyngeal myogenic muscle system. The sequence is that of FMRFamide-like neuropeptides 19 from Caenorhabditis elegans.